Here is a 140-residue protein sequence, read N- to C-terminus: Small ribosomal subunit protein uS12m (140 aa).

This sequence belongs to the universal ribosomal protein uS12 family.

It localises to the mitochondrion. The chain is Small ribosomal subunit protein uS12m (mrps12) from Dictyostelium discoideum (Social amoeba).